Consider the following 253-residue polypeptide: Triosephosphate isomerase (253 aa).

9 to 11 is a binding site for substrate; the sequence is NWK. Residue H97 is the Electrophile of the active site. E169 functions as the Proton acceptor in the catalytic mechanism. Residues G175, S215, and 236–237 contribute to the substrate site; that span reads GG.

It belongs to the triosephosphate isomerase family. As to quaternary structure, homodimer.

It is found in the cytoplasm. It carries out the reaction D-glyceraldehyde 3-phosphate = dihydroxyacetone phosphate. The protein operates within carbohydrate biosynthesis; gluconeogenesis. Its pathway is carbohydrate degradation; glycolysis; D-glyceraldehyde 3-phosphate from glycerone phosphate: step 1/1. Its function is as follows. Involved in the gluconeogenesis. Catalyzes stereospecifically the conversion of dihydroxyacetone phosphate (DHAP) to D-glyceraldehyde-3-phosphate (G3P). In Staphylococcus haemolyticus (strain JCSC1435), this protein is Triosephosphate isomerase.